Here is a 784-residue protein sequence, read N- to C-terminus: Rabenosyn-5 (784 aa).

Alanine 2 carries the N-acetylalanine modification. Phosphoserine is present on serine 3. The C2H2-type zinc-finger motif lies at 14–37 (FLCPLCLKDLQSFYQLHSHYEEEH). The segment at 100–263 (RSHLSDFKKH…HCKDTLLKRE (164 aa)) is necessary for the correct targeting to endosomes. The FYVE-type zinc finger occupies 157-260 (DQDVPFCPDC…CCTHCKDTLL (104 aa)). 6 residues coordinate Zn(2+): cysteine 163, cysteine 166, cysteine 179, cysteine 182, cysteine 187, and cysteine 190. The span at 207–224 (KESLSTHTSPSQSPNSVH) shows a compositional bias: polar residues. The interval 207–241 (KESLSTHTSPSQSPNSVHGSRRGSISSMSSVSSVL) is disordered. Residues serine 215, serine 219, serine 226, and serine 230 each carry the phosphoserine modification. Residues 228 to 240 (RGSISSMSSVSSV) show a composition bias toward low complexity. The Zn(2+) site is built by cysteine 252 and cysteine 255. A necessary for interaction with RAB4A region spans residues 264–500 (QQIDEKEHTP…QLQDEYDQQQ (237 aa)). Positions 264 to 784 (QQIDEKEHTP…TLAKQKGGTD (521 aa)) are necessary for interaction with EHD1. 2 coiled-coil regions span residues 378–414 (TKEQ…LEER) and 472–531 (QAKA…RELE). Residues 390–400 (KEEMERKRAVE) are compositionally biased toward basic and acidic residues. A disordered region spans residues 390-429 (KEEMERKRAVERQAALESQRRLEERQSGLASRAANGEVAS). Residues 496 to 515 (YDQQQTEKAIELSRRQAEEE) form the UIM domain. The segment at 574–732 (DLGSSPVPSS…DSDSGPEAEE (159 aa)) is disordered. The span at 579–598 (PVPSSTAPKTPSLSSTQPTR) shows a compositional bias: polar residues. Positions 627–784 (PFDEEDLSSP…TLAKQKGGTD (158 aa)) are necessary for interaction with RAB5A. Residues 663–673 (PFEEEDEEEEA) are compositionally biased toward acidic residues. Serine 684 carries the phosphoserine modification. Residues 722–732 (MDSDSGPEAEE) are compositionally biased toward acidic residues.

As to quaternary structure, interacts with EHD1, RAB4A, RAB5A, RAB14, RAB22A, RAB24 and VPS45. Binds simultaneously to RAB4A and RAB5A in vitro. Interacts with RAB4A and RAB5A that has been activated by GTP binding.

It localises to the cell membrane. The protein resides in the early endosome membrane. Rab4/Rab5 effector protein acting in early endocytic membrane fusion and membrane trafficking of recycling endosomes. Required for endosome fusion either homotypically or with clathrin coated vesicles. Plays a role in the lysosomal trafficking of CTSD/cathepsin D from the Golgi to lysosomes. Also promotes the recycling of transferrin directly from early endosomes to the plasma membrane. Binds phospholipid vesicles containing phosphatidylinositol 3-phosphate (PtdInsP3). Plays a role in the recycling of transferrin receptor to the plasma membrane. The polypeptide is Rabenosyn-5 (Homo sapiens (Human)).